Here is a 331-residue protein sequence, read N- to C-terminus: D/L-glyceraldehyde reductase (331 aa).

Catalysis depends on Tyr51, which acts as the Proton donor. His114 contributes to the substrate binding site. 213 to 276 (SAFGNNTKGL…SVTKARIAEN (64 aa)) contacts NADP(+).

It belongs to the aldo/keto reductase family.

The catalysed reaction is glycerol + NADP(+) = L-glyceraldehyde + NADPH + H(+). It carries out the reaction glycerol + NADP(+) = D-glyceraldehyde + NADPH + H(+). It participates in carbohydrate acid metabolism. Mediates the conversion of L-glyceraldehyde to glycerol in D-galacturonate catabolic process. Also able to reduce D-glyceraldehyde. The protein is D/L-glyceraldehyde reductase (gld1) of Hypocrea jecorina (Trichoderma reesei).